Reading from the N-terminus, the 341-residue chain is Phosphate acyltransferase (341 aa).

The protein belongs to the PlsX family. In terms of assembly, homodimer. Probably interacts with PlsY.

The protein resides in the cytoplasm. The enzyme catalyses a fatty acyl-[ACP] + phosphate = an acyl phosphate + holo-[ACP]. The protein operates within lipid metabolism; phospholipid metabolism. Functionally, catalyzes the reversible formation of acyl-phosphate (acyl-PO(4)) from acyl-[acyl-carrier-protein] (acyl-ACP). This enzyme utilizes acyl-ACP as fatty acyl donor, but not acyl-CoA. The chain is Phosphate acyltransferase from Aliivibrio salmonicida (strain LFI1238) (Vibrio salmonicida (strain LFI1238)).